A 396-amino-acid chain; its full sequence is S-adenosylmethionine synthase 1 (396 aa).

Mg(2+) is bound at residue Glu-13. His-19 is an ATP binding site. K(+) is bound at residue Glu-47. L-methionine is bound by residues Glu-60 and Gln-103. ATP is bound by residues Asp-171–Lys-173, Ser-239–Phe-242, Asp-250, Arg-256–Lys-257, Ala-273, Lys-277, and Lys-281. Asp-250 provides a ligand contact to L-methionine. An L-methionine-binding site is contributed by Lys-281.

This sequence belongs to the AdoMet synthase family. Homotetramer. The cofactor is Mn(2+). It depends on Mg(2+) as a cofactor. Requires Co(2+) as cofactor. K(+) serves as cofactor.

It localises to the cytoplasm. The catalysed reaction is L-methionine + ATP + H2O = S-adenosyl-L-methionine + phosphate + diphosphate. It functions in the pathway amino-acid biosynthesis; S-adenosyl-L-methionine biosynthesis; S-adenosyl-L-methionine from L-methionine: step 1/1. In terms of biological role, catalyzes the formation of S-adenosylmethionine from methionine and ATP. The reaction comprises two steps that are both catalyzed by the same enzyme: formation of S-adenosylmethionine (AdoMet) and triphosphate, and subsequent hydrolysis of the triphosphate. May be involved in the synthesis of betain in response to abiotic stress such as high salinity. The sequence is that of S-adenosylmethionine synthase 1 (SAMS1) from Beta vulgaris (Sugar beet).